A 702-amino-acid chain; its full sequence is Arylphorin subunit alpha (702 aa).

The signal sequence occupies residues 1-16 (MKTVVILAGLVALALS). N-linked (GlcNAc...) asparagine glycans are attached at residues asparagine 75 and asparagine 214.

It belongs to the hemocyanin family. Arylphorin is a hexamer of subunits alpha and beta. In terms of tissue distribution, fat body.

It localises to the secreted. Its subcellular location is the extracellular space. Arylphorin is a larval storage protein (LSP) which may serve as a storage protein used primarily as a source of aromatic amino acids for protein synthesis during metamorphosis. It is a constituent of the sclerotizing system of the cuticle, and serves as a carrier for ecdysteroid hormone. The chain is Arylphorin subunit alpha from Manduca sexta (Tobacco hawkmoth).